Consider the following 832-residue polypeptide: Envelope glycoprotein gp160 (832 aa).

An N-terminal signal peptide occupies residues 1-31 (MRVRGMQRNWQHLGKWGLLFLGILIICNAAD). Over 32–660 (NLWVTVYYGV…ISNWLWYIKI (629 aa)) the chain is Extracellular. Residues cysteine 53 and cysteine 73 are joined by a disulfide bond. Asparagine 87, asparagine 129, asparagine 132, asparagine 135, asparagine 146, asparagine 150, asparagine 177, asparagine 178, asparagine 188, asparagine 225, asparagine 232, asparagine 253, asparagine 267, asparagine 280, asparagine 286, asparagine 292, asparagine 322, asparagine 329, asparagine 345, and asparagine 352 each carry an N-linked (GlcNAc...) asparagine; by host glycan. Cystine bridges form between cysteine 118–cysteine 196, cysteine 125–cysteine 187, cysteine 130–cysteine 147, cysteine 209–cysteine 238, and cysteine 219–cysteine 230. The segment at 130–146 (CTNATNNSQEKPGAMQN) is V1. Positions 147–187 (CSFNMTTEVRDKKLKLSALFYRLDIVPIGNNNSSEYRLINC) are V2. The V3 stretch occupies residues 287-320 (CTRPNNNTRKGIHLGPGQTFYATGAIIGDIRKAH). Cysteine 287 and cysteine 321 are joined by a disulfide. Residues 354 to 364 (SSGGDLEITMH) form a CD4-binding loop region. 2 disulfide bridges follow: cysteine 368-cysteine 422 and cysteine 375-cysteine 395. A V4 region spans residues 375-395 (CDTSGLFNDTGSNNGTITLPC). 5 N-linked (GlcNAc...) asparagine; by host glycosylation sites follow: asparagine 382, asparagine 388, asparagine 419, asparagine 425, and asparagine 437. The tract at residues 438–447 (ESNIETFRPE) is V5. Residues 488 to 508 (AAGLGALFLGFLGDSREHMGA) form a fusion peptide region. The tract at residues 550-568 (KQLQARVLAVERYLKDQQL) is immunosuppression. Cysteine 574 and cysteine 580 are joined by a disulfide. N-linked (GlcNAc...) asparagine; by host glycans are attached at residues asparagine 587, asparagine 592, asparagine 601, and asparagine 613. A coiled-coil region spans residues 609–643 (KEISNYSNIIYKLIEESQNQQEKNEQELLALDKWA). Residues 638–659 (ALDKWASLWNWFDISNWLWYIK) form an MPER; binding to GalCer region. Residues 661–681 (FIMIVGGLIGLRIVFAVLSIV) traverse the membrane as a helical segment. Topologically, residues 682–832 (NRVRKGYSPL…IRQGAERALL (151 aa)) are cytoplasmic. The YXXL motif; contains endocytosis signal signature appears at 688–691 (YSPL). The interval 695 to 717 (TLIPSPRGPDRPEGIEEGGGEQG) is disordered. The S-palmitoyl cysteine; by host moiety is linked to residue cysteine 740. A Di-leucine internalization motif motif is present at residues 831–832 (LL).

This sequence belongs to the HIV-1 env protein family. The mature envelope protein (Env) consists of a homotrimer of non-covalently associated gp120-gp41 heterodimers. The resulting complex protrudes from the virus surface as a spike. There seems to be as few as 10 spikes on the average virion. Interacts with host CD4, CCR5 and CXCR4. Gp120 also interacts with the C-type lectins CD209/DC-SIGN and CLEC4M/DC-SIGNR (collectively referred to as DC-SIGN(R)). Gp120 and gp41 interact with GalCer. Gp120 interacts with host ITGA4/ITGB7 complex; on CD4+ T-cells, this interaction results in rapid activation of integrin ITGAL/LFA-1, which facilitates efficient cell-to-cell spreading of HIV-1. Gp120 interacts with cell-associated heparan sulfate; this interaction increases virus infectivity on permissive cells and may be involved in infection of CD4- cells. As to quaternary structure, the mature envelope protein (Env) consists of a homotrimer of non-covalently associated gp120-gp41 heterodimers. The resulting complex protrudes from the virus surface as a spike. There seems to be as few as 10 spikes on the average virion. In terms of processing, highly glycosylated by host. The high number of glycan on the protein is reffered to as 'glycan shield' because it contributes to hide protein sequence from adaptive immune system. Post-translationally, palmitoylation of the transmembrane protein and of Env polyprotein (prior to its proteolytic cleavage) is essential for their association with host cell membrane lipid rafts. Palmitoylation is therefore required for envelope trafficking to classical lipid rafts, but not for viral replication. Specific enzymatic cleavages in vivo yield mature proteins. Envelope glycoproteins are synthesized as an inactive precursor that is heavily N-glycosylated and processed likely by host cell furin in the Golgi to yield the mature SU and TM proteins. The cleavage site between SU and TM requires the minimal sequence [KR]-X-[KR]-R. About 2 of the 9 disulfide bonds of gp41 are reduced by P4HB/PDI, following binding to CD4 receptor.

It localises to the virion membrane. Its subcellular location is the host cell membrane. It is found in the host endosome membrane. Its function is as follows. Oligomerizes in the host endoplasmic reticulum into predominantly trimers. In a second time, gp160 transits in the host Golgi, where glycosylation is completed. The precursor is then proteolytically cleaved in the trans-Golgi and thereby activated by cellular furin or furin-like proteases to produce gp120 and gp41. Functionally, attaches the virus to the host lymphoid cell by binding to the primary receptor CD4. This interaction induces a structural rearrangement creating a high affinity binding site for a chemokine coreceptor like CXCR4 and/or CCR5. Acts as a ligand for CD209/DC-SIGN and CLEC4M/DC-SIGNR, which are respectively found on dendritic cells (DCs), and on endothelial cells of liver sinusoids and lymph node sinuses. These interactions allow capture of viral particles at mucosal surfaces by these cells and subsequent transmission to permissive cells. HIV subverts the migration properties of dendritic cells to gain access to CD4+ T-cells in lymph nodes. Virus transmission to permissive T-cells occurs either in trans (without DCs infection, through viral capture and transmission), or in cis (following DCs productive infection, through the usual CD4-gp120 interaction), thereby inducing a robust infection. In trans infection, bound virions remain infectious over days and it is proposed that they are not degraded, but protected in non-lysosomal acidic organelles within the DCs close to the cell membrane thus contributing to the viral infectious potential during DCs' migration from the periphery to the lymphoid tissues. On arrival at lymphoid tissues, intact virions recycle back to DCs' cell surface allowing virus transmission to CD4+ T-cells. In terms of biological role, acts as a class I viral fusion protein. Under the current model, the protein has at least 3 conformational states: pre-fusion native state, pre-hairpin intermediate state, and post-fusion hairpin state. During fusion of viral and target intracellular membranes, the coiled coil regions (heptad repeats) assume a trimer-of-hairpins structure, positioning the fusion peptide in close proximity to the C-terminal region of the ectodomain. The formation of this structure appears to drive apposition and subsequent fusion of viral and target cell membranes. Complete fusion occurs in host cell endosomes and is dynamin-dependent, however some lipid transfer might occur at the plasma membrane. The virus undergoes clathrin-dependent internalization long before endosomal fusion, thus minimizing the surface exposure of conserved viral epitopes during fusion and reducing the efficacy of inhibitors targeting these epitopes. Membranes fusion leads to delivery of the nucleocapsid into the cytoplasm. In Human immunodeficiency virus type 1 group M subtype F1 (isolate VI850) (HIV-1), this protein is Envelope glycoprotein gp160.